We begin with the raw amino-acid sequence, 955 residues long: Glutamyl aminopeptidase (955 aa).

At 1 to 17 (MDIEDKTSKMHCMKGKH) the chain is on the cytoplasmic side. Residues 18 to 38 (VVIICGVVIAVGLILGLGLGL) traverse the membrane as a helical; Signal-anchor for type II membrane protein segment. The Extracellular segment spans residues 39 to 955 (GLDTKACNPP…LENSEHSNFA (917 aa)). N-linked (GlcNAc...) asparagine glycosylation is found at Asn118 and Asn192. A substrate-binding site is contributed by Glu218. 2 N-linked (GlcNAc...) asparagine glycosylation sites follow: Asn319 and Asn335. 352 to 356 (GAMEN) is a substrate binding site. His388 is a binding site for Zn(2+). Glu389 serves as the catalytic Proton acceptor. Zn(2+) contacts are provided by His392 and Glu411. N-linked (GlcNAc...) asparagine glycans are attached at residues Asn458, Asn547, Asn584, Asn592, Asn674, Asn759, Asn823, and Asn836. Arg882 provides a ligand contact to substrate.

It belongs to the peptidase M1 family. As to quaternary structure, homodimer; disulfide-linked. Requires Zn(2+) as cofactor. N-glycosylated. Glycosylation counts for an increased mass of about 32% of the protein mass (about 48 kDa).

It is found in the cell membrane. The catalysed reaction is Release of N-terminal glutamate (and to a lesser extent aspartate) from a peptide.. Its activity is regulated as follows. Substrate specificity is modulated by calcium which enhances the enzymatic activity for cleavage of acidic residues while reducing its activity with neutral and basic residues. Hydrolytic activity is inhibited by the aminopeptidase inhibitor (Leu and acidic inhibitor) amastatin, but not by bestatin (aminopeptidase inhibitor Leu inhibitor), leupeptin, pepstatin A and PMSF. Its hydrolytic activity is also strongly reduced by zinc ions, with a complete inhibition at 0.5 mM, and moderately inhibited by cobalt and copper ions. Its function is as follows. Venom protein that cleaves N-terminal acidic residues from peptides with high potency in presence of calcium. It may have several roles in venom including alteration of blood pressure by cleaving circulating angiotensin-2, general degradation of host tissue, increase of permeability to other venom components, and/or processing of other toxins in the venom. In Bitis rhinoceros (West African gaboon viper), this protein is Glutamyl aminopeptidase.